The primary structure comprises 67 residues: Large ribosomal subunit protein uL29 (67 aa).

The protein belongs to the universal ribosomal protein uL29 family.

This is Large ribosomal subunit protein uL29 from Wolbachia pipientis subsp. Culex pipiens (strain wPip).